A 185-amino-acid polypeptide reads, in one-letter code: Protein-arginine kinase activator protein (185 aa).

Phosphoarginine occurs at positions 115 and 169. The UVR domain maps to 139–174 (RRQIDMLKKELESLIHQEEFENAAHVRDQIRLLEQS).

In terms of assembly, interacts with McsB. Post-translationally, phosphorylated on Arg residues by McsB.

Activates the phosphorylation activity of the protein-arginine kinase McsB. Is required for the delocalization of competence proteins from the cell poles. This is Protein-arginine kinase activator protein (mcsA) from Bacillus subtilis (strain 168).